Here is a 350-residue protein sequence, read N- to C-terminus: Holliday junction branch migration complex subunit RuvB (350 aa).

Positions 1 to 183 (MSAERLVNPH…FVAVHRLVFY (183 aa)) are large ATPase domain (RuvB-L). ATP-binding positions include Leu-22, Arg-23, Gly-64, Lys-67, Thr-68, Ser-69, 130-132 (EDF), Arg-173, Tyr-183, and Arg-220. Residue Thr-68 participates in Mg(2+) binding. The small ATPAse domain (RuvB-S) stretch occupies residues 184-254 (SDDAMTEIVS…VARDALAQLE (71 aa)). Positions 257-350 (ELGLDENDRR…ESGPQQATLF (94 aa)) are head domain (RuvB-H). Residues Arg-312 and Arg-317 each contribute to the DNA site. The interval 331–350 (YPERTLPADDESGPQQATLF) is disordered.

Belongs to the RuvB family. As to quaternary structure, homohexamer. Forms an RuvA(8)-RuvB(12)-Holliday junction (HJ) complex. HJ DNA is sandwiched between 2 RuvA tetramers; dsDNA enters through RuvA and exits via RuvB. An RuvB hexamer assembles on each DNA strand where it exits the tetramer. Each RuvB hexamer is contacted by two RuvA subunits (via domain III) on 2 adjacent RuvB subunits; this complex drives branch migration. In the full resolvosome a probable DNA-RuvA(4)-RuvB(12)-RuvC(2) complex forms which resolves the HJ.

The protein resides in the cytoplasm. It carries out the reaction ATP + H2O = ADP + phosphate + H(+). In terms of biological role, the RuvA-RuvB-RuvC complex processes Holliday junction (HJ) DNA during genetic recombination and DNA repair, while the RuvA-RuvB complex plays an important role in the rescue of blocked DNA replication forks via replication fork reversal (RFR). RuvA specifically binds to HJ cruciform DNA, conferring on it an open structure. The RuvB hexamer acts as an ATP-dependent pump, pulling dsDNA into and through the RuvAB complex. RuvB forms 2 homohexamers on either side of HJ DNA bound by 1 or 2 RuvA tetramers; 4 subunits per hexamer contact DNA at a time. Coordinated motions by a converter formed by DNA-disengaged RuvB subunits stimulates ATP hydrolysis and nucleotide exchange. Immobilization of the converter enables RuvB to convert the ATP-contained energy into a lever motion, pulling 2 nucleotides of DNA out of the RuvA tetramer per ATP hydrolyzed, thus driving DNA branch migration. The RuvB motors rotate together with the DNA substrate, which together with the progressing nucleotide cycle form the mechanistic basis for DNA recombination by continuous HJ branch migration. Branch migration allows RuvC to scan DNA until it finds its consensus sequence, where it cleaves and resolves cruciform DNA. The chain is Holliday junction branch migration complex subunit RuvB from Chloroflexus aurantiacus (strain ATCC 29366 / DSM 635 / J-10-fl).